Consider the following 105-residue polypeptide: Small ribosomal subunit protein uS10 (105 aa).

The protein belongs to the universal ribosomal protein uS10 family. In terms of assembly, part of the 30S ribosomal subunit.

Functionally, involved in the binding of tRNA to the ribosomes. This Rickettsia conorii (strain ATCC VR-613 / Malish 7) protein is Small ribosomal subunit protein uS10.